We begin with the raw amino-acid sequence, 864 residues long: DNA mismatch repair protein MutS (864 aa).

Residue 607 to 614 participates in ATP binding; sequence GPNMGGKS.

It belongs to the DNA mismatch repair MutS family.

Its function is as follows. This protein is involved in the repair of mismatches in DNA. It is possible that it carries out the mismatch recognition step. This protein has a weak ATPase activity. The protein is DNA mismatch repair protein MutS of Neisseria gonorrhoeae (strain ATCC 700825 / FA 1090).